A 116-amino-acid chain; its full sequence is Nucleoid-associated protein P9215_00191 (116 aa).

This sequence belongs to the YbaB/EbfC family. As to quaternary structure, homodimer.

It localises to the cytoplasm. The protein resides in the nucleoid. Functionally, binds to DNA and alters its conformation. May be involved in regulation of gene expression, nucleoid organization and DNA protection. The sequence is that of Nucleoid-associated protein P9215_00191 from Prochlorococcus marinus (strain MIT 9215).